The following is a 223-amino-acid chain: ATP-dependent dethiobiotin synthetase BioD (223 aa).

Thr16 serves as a coordination point for Mg(2+). Residue Lys37 is part of the active site. Ser41 serves as a coordination point for substrate. Asp50 and Glu111 together coordinate Mg(2+). Residues Asp50, Glu111–Gly114, Asn171–Gln172, Ala201–Val203, and Glu208 contribute to the ATP site.

Belongs to the dethiobiotin synthetase family. As to quaternary structure, homodimer. It depends on Mg(2+) as a cofactor.

The protein localises to the cytoplasm. It carries out the reaction (7R,8S)-7,8-diammoniononanoate + CO2 + ATP = (4R,5S)-dethiobiotin + ADP + phosphate + 3 H(+). Its pathway is cofactor biosynthesis; biotin biosynthesis; biotin from 7,8-diaminononanoate: step 1/2. Its function is as follows. Catalyzes a mechanistically unusual reaction, the ATP-dependent insertion of CO2 between the N7 and N8 nitrogen atoms of 7,8-diaminopelargonic acid (DAPA, also called 7,8-diammoniononanoate) to form a ureido ring. The sequence is that of ATP-dependent dethiobiotin synthetase BioD from Anaeromyxobacter sp. (strain Fw109-5).